Here is a 464-residue protein sequence, read N- to C-terminus: Uronate isomerase (464 aa).

It belongs to the metallo-dependent hydrolases superfamily. Uronate isomerase family.

It carries out the reaction D-glucuronate = D-fructuronate. The catalysed reaction is aldehydo-D-galacturonate = keto-D-tagaturonate. It functions in the pathway carbohydrate metabolism; pentose and glucuronate interconversion. In Caldicellulosiruptor bescii (strain ATCC BAA-1888 / DSM 6725 / KCTC 15123 / Z-1320) (Anaerocellum thermophilum), this protein is Uronate isomerase.